Reading from the N-terminus, the 481-residue chain is p-aminobenzoyl-glutamate hydrolase subunit B (481 aa).

Forms a heterodimer with AbgA. The cofactor is Mn(2+).

Functionally, component of the p-aminobenzoyl-glutamate hydrolase multicomponent enzyme system which catalyzes the cleavage of p-aminobenzoyl-glutamate (PABA-GLU) to form p-aminobenzoate (PABA) and glutamate. AbgAB does not degrade dipeptides and the physiological role of abgABT should be clarified. This is p-aminobenzoyl-glutamate hydrolase subunit B (abgB) from Escherichia coli (strain K12).